Consider the following 268-residue polypeptide: MPSGKPSSVFPLHPKPTPLKPSSSTSSSNNNSTNQACAACKYQRRKCAPDCLLAPYFPHDRHRQFLNAHKLFGVSNITKIIKSLTPPEKDAAMHTIMFQSDARANDPVDGCYGIIKKLQYQIEYTRNELEIVLQQLAMFRDRAHQHHHQEPHIQMQEQEDLSSFSSSCDLNNNNSIPYNYPLNHIQEPNQQQYCSSGNNFSGLQEDMWCLQLQDSSTIVNMKAGFIDECEDVKPVEEVSSERHEFEPHEAFVEQRKLDLPSAQYIISS.

The disordered stretch occupies residues 1 to 31 (MPSGKPSSVFPLHPKPTPLKPSSSTSSSNNN). Residues 22-31 (SSSTSSSNNN) show a composition bias toward low complexity. Residues 35 to 136 (QACAACKYQR…NELEIVLQQL (102 aa)) form the LOB domain.

It belongs to the LOB domain-containing protein family.

The sequence is that of LOB domain-containing protein 22 (LBD22) from Arabidopsis thaliana (Mouse-ear cress).